We begin with the raw amino-acid sequence, 977 residues long: 2-oxoglutarate dehydrogenase E1 component (977 aa).

In terms of domain architecture, RPE1 insert spans 77–125; sequence VLNNRHLAKPAYREEFKGDTERSTAAYIDIREDASTGSTSKLPLEAKFG.

It belongs to the alpha-ketoglutarate dehydrogenase family. In terms of assembly, homodimer. Part of the 2-oxoglutarate dehydrogenase (OGDH) complex composed of E1 (2-oxoglutarate dehydrogenase), E2 (dihydrolipoamide succinyltransferase) and E3 (dihydrolipoamide dehydrogenase); the complex contains multiple copies of the three enzymatic components (E1, E2 and E3). It depends on thiamine diphosphate as a cofactor.

The catalysed reaction is N(6)-[(R)-lipoyl]-L-lysyl-[protein] + 2-oxoglutarate + H(+) = N(6)-[(R)-S(8)-succinyldihydrolipoyl]-L-lysyl-[protein] + CO2. Functionally, E1 component of the 2-oxoglutarate dehydrogenase (OGDH) complex which catalyzes the decarboxylation of 2-oxoglutarate, the first step in the conversion of 2-oxoglutarate to succinyl-CoA and CO(2). The polypeptide is 2-oxoglutarate dehydrogenase E1 component (sucA) (Rickettsia felis (strain ATCC VR-1525 / URRWXCal2) (Rickettsia azadi)).